A 354-amino-acid polypeptide reads, in one-letter code: Ferrochelatase (354 aa).

Fe cation-binding residues include H214 and E295.

This sequence belongs to the ferrochelatase family.

It is found in the cytoplasm. The catalysed reaction is heme b + 2 H(+) = protoporphyrin IX + Fe(2+). Its pathway is porphyrin-containing compound metabolism; protoheme biosynthesis; protoheme from protoporphyrin-IX: step 1/1. Its function is as follows. Catalyzes the ferrous insertion into protoporphyrin IX. The chain is Ferrochelatase from Burkholderia lata (strain ATCC 17760 / DSM 23089 / LMG 22485 / NCIMB 9086 / R18194 / 383).